Consider the following 284-residue polypeptide: 2-dehydro-3-deoxyphosphooctonate aldolase (284 aa).

The protein belongs to the KdsA family.

It is found in the cytoplasm. It carries out the reaction D-arabinose 5-phosphate + phosphoenolpyruvate + H2O = 3-deoxy-alpha-D-manno-2-octulosonate-8-phosphate + phosphate. It functions in the pathway carbohydrate biosynthesis; 3-deoxy-D-manno-octulosonate biosynthesis; 3-deoxy-D-manno-octulosonate from D-ribulose 5-phosphate: step 2/3. Its pathway is bacterial outer membrane biogenesis; lipopolysaccharide biosynthesis. The protein is 2-dehydro-3-deoxyphosphooctonate aldolase of Synechococcus sp. (strain ATCC 27144 / PCC 6301 / SAUG 1402/1) (Anacystis nidulans).